Consider the following 136-residue polypeptide: Group 1 truncated hemoglobin GlbN (136 aa).

A heme-binding site is contributed by His-81.

The protein belongs to the truncated hemoglobin family. Group I subfamily. In terms of assembly, homodimer. Heme is required as a cofactor.

Its function is as follows. Binds oxygen cooperatively with very high affinity because of a fast combination and a slow dissociation rate. The protein is Group 1 truncated hemoglobin GlbN (glbN) of Mycolicibacterium paratuberculosis (strain ATCC BAA-968 / K-10) (Mycobacterium paratuberculosis).